The primary structure comprises 587 residues: Putative adhesin (587 aa).

The N-terminal stretch at 1–19 (MKFAISTLLIILQAAAVFA) is a signal peptide. Cys211 and Cys261 are disulfide-bonded. N-linked (GlcNAc...) asparagine glycosylation occurs at Asn239. 4 repeat units span residues 432–455 (IVTV…TYTK), 466–489 (IVTV…TYTK), 491–512 (PEIV…YHDV), and 513–531 (PEVV…TTTY). Positions 432–531 (IVTVITKEGG…EGGEKVTTTY (100 aa)) are 4 X 24 AA approximate tandem repeats, Thr-rich. Residue Ser562 is the site of GPI-anchor amidated serine attachment. The propeptide at 563 to 587 (EAQVNLGSKSAVGLLAIVPMLFLAI) is removed in mature form.

In terms of processing, the GPI-anchor is attached to the protein in the endoplasmic reticulum and serves to target the protein to the cell surface. There, the glucosamine-inositol phospholipid moiety is cleaved off and the GPI-modified mannoprotein is covalently attached via its lipidless GPI glycan remnant to the 1,6-beta-glucan of the outer cell wall layer.

The protein resides in the cell membrane. Its subcellular location is the secreted. The protein localises to the cell wall. In terms of biological role, putative adhesion protein. May be involved in cell-cell interaction, interacting with other proteins by salt bridges and hydrogen bonds. This is Putative adhesin from Komagataella phaffii (strain ATCC 76273 / CBS 7435 / CECT 11047 / NRRL Y-11430 / Wegner 21-1) (Yeast).